The primary structure comprises 345 residues: Anthranilate phosphoribosyltransferase (345 aa).

5-phospho-alpha-D-ribose 1-diphosphate-binding positions include Gly-84, 87–88 (GD), Thr-92, 94–97 (NIST), 112–120 (KHGNRSVSS), and Ser-124. Gly-84 serves as a coordination point for anthranilate. Mg(2+) is bound at residue Ser-96. Asn-115 contributes to the anthranilate binding site. Residue Arg-170 coordinates anthranilate. Asp-229 and Glu-230 together coordinate Mg(2+).

Belongs to the anthranilate phosphoribosyltransferase family. In terms of assembly, homodimer. Requires Mg(2+) as cofactor.

The catalysed reaction is N-(5-phospho-beta-D-ribosyl)anthranilate + diphosphate = 5-phospho-alpha-D-ribose 1-diphosphate + anthranilate. The protein operates within amino-acid biosynthesis; L-tryptophan biosynthesis; L-tryptophan from chorismate: step 2/5. Catalyzes the transfer of the phosphoribosyl group of 5-phosphorylribose-1-pyrophosphate (PRPP) to anthranilate to yield N-(5'-phosphoribosyl)-anthranilate (PRA). This chain is Anthranilate phosphoribosyltransferase, found in Xanthomonas euvesicatoria pv. vesicatoria (strain 85-10) (Xanthomonas campestris pv. vesicatoria).